We begin with the raw amino-acid sequence, 337 residues long: Probable sulfurtransferase (337 aa).

Residue glycine 83 coordinates ATP. [4Fe-4S] cluster is bound by residues cysteine 172 and cysteine 175. Residues lysine 179 and glycine 206 each contribute to the ATP site. Cysteine 284 serves as a coordination point for [4Fe-4S] cluster.

Belongs to the TtcA family. [4Fe-4S] cluster is required as a cofactor. The cofactor is Mg(2+).

The sequence is that of Probable sulfurtransferase from Methanocaldococcus jannaschii (strain ATCC 43067 / DSM 2661 / JAL-1 / JCM 10045 / NBRC 100440) (Methanococcus jannaschii).